The following is a 597-amino-acid chain: Centrosomal protein of 70 kDa (597 aa).

Residues 1–23 (MFPVAPKPQDSSQASDRLMTEKQ) are disordered. Coiled-coil stretches lie at residues 66-179 (MRQN…QMEV) and 254-326 (TYKG…KKAE). One copy of the TPR repeat lies at 483–516 (NGVYPRMNEVYTRLGEMNNAVRNLQELLELDSSS).

Directly interacts with tubulin-gamma; this interaction determines centrosomal localization.

It is found in the cytoplasm. The protein resides in the cytoskeleton. The protein localises to the microtubule organizing center. It localises to the centrosome. Functionally, plays a role in the organization of both preexisting and nascent microtubules in interphase cells. During mitosis, required for the organization and orientation of the mitotic spindle. In Pongo abelii (Sumatran orangutan), this protein is Centrosomal protein of 70 kDa (CEP70).